A 345-amino-acid polypeptide reads, in one-letter code: MVDNQGPLAKDVSLANPPSDSISELSWSPVANHLAMSSWDQTVRIYDVSQSGNGEGQALFNFPAPVLSCTFSPDGAKVLGGATDGSARLMDLVAGKEAQQVAAHDAPVRCVRFFGNPGVRDPIAVTGSWDQTVKYWDLRQDRPLATLQCQERVYAMDLCQNLLVVATAGRLVHVVQLSNADQIYKTVTSPLKHQTRTVTCIPDASGFAIGSTEGRTGFHYVDESKSSLNFTFRCHREMAASKNTQNVYAVNDVSFHPKYYTFSTAGADGTFAFWDKDAHHRLKSFPSVGAPITSTGFNHDGTIFAYAVSYDWSKGFRYNTPEHPTRVVCHPVDDVDCRPKNPVKR.

WD repeat units lie at residues 15–49 (ANPP…YDVS), 59–100 (LFNF…EAQQ), 101–146 (VAAH…PLAT), and 250–284 (VNDV…RLKS).

This sequence belongs to the WD repeat rae1 family.

It participates in secondary metabolite biosynthesis. Functionally, WD40 repeat protein; part of the gene cluster that mediates the biosynthesis of oxaleimides, cytotoxic compounds containing an unusual disubstituted succinimide moiety. The first step of the pathway is provided by the HR-PKS poxF that serves in a new mode of collaborative biosynthesis with the PKS-NRPS poxE, by providing the olefin containing amino acid substrate via the synthesis of an ACP-bound dec-4-enoate. The cytochrome P450 monooxygenase poxM-catalyzed oxidation at the alpha-position creates the enzyme-bound 2-hydroxydec-4-enoyl-ACP thioester, which may be prone to spontaneous hydrolysis to yield 2-hydroxydec-4-enoic acid due to increased electrophilicity of the carbonyl. 2-hydroxydec-4-enoic acid can then be further oxidized by poxM to yield the alpha-ketoacid 2-oxodec-4-enoicacid, which is reductively aminated by the aminotransferase poxL to yield (S,E)-2-aminodec-4-enoic acid. The Hybrid PKS-NRPS synthetase poxE then performs condensation between the octaketide product of its PKS modules and the amino group of (S,E)-2-aminodec-4-enoic acid which is activated and incorporated by the adenylation domain. The resulting aminoacyl product can be cyclized by the Diels-Alderase PoxQ and reductively released by the reductive (R) domain of poxE to yield an aldehyde intermediate. The released aldehyde is then substrate for a Knoevenagel condensation by the hydrolyase poxO followed by an oxidation at the 5-position of the pyrrolidone ring. The presence of the olefin from the amino acid building block allows for migration of the substituted allyl group to occur. This allylic transposition reaction takes place in a conjugate addition, semipinacol-like fashion to yield a succinimide intermediate. Iterative two-electron oxidations of the C7 methyl of the succinimide intermediate to the carboxylic acid can be catalyzed by one of two remaining cytochrome P450 monooxygenasess poxC or poxD to yield oxaleimide A. Subsequent oxidation yields the maleimide scaffold oxaleimide I. Both oxaleimide A and oxaleimide I can undergo oxidative modifications in the decalin ring to yield the series of products oxaleimides B to H. This chain is WD40 repeat protein poxJ, found in Penicillium oxalicum (strain 114-2 / CGMCC 5302) (Penicillium decumbens).